Consider the following 359-residue polypeptide: MIESKTYAVLGLGNGGHAFAAYLALKGQSVLAWDIDAQRIKEIQDRGAIIAEGPGLAGTAHPDLLTSDIGLAVKDADVILIVVPAIHHASIAANIASYISEGQLIILNPGATGGALEFRKILRENGAPEVTIGETSSMLFTCRSERPGQVTVNAIKGAMDFACLPAAKAGWALEQIGSVLPQYVAVENVLHTSLTNVNAVMHPLPTLLNAARCESGTPFQYYLEGITPSVGSLAEKVDAERIAIAKAFDLNVPSVCEWYKESYGQSPATIYEAVQGNPAYRGIAGPINLNTRYFFEDVSTGLVPLSELGRAVNVPTPLIDAVLDLISSLIDTDFRKEGRTLEKLGLSGLTAAGIRSAVE.

This sequence belongs to the lysopine/nopaline/octopine/opine/vitopine dehydrogenases family. In terms of assembly, homodimer.

The catalysed reaction is (2S)-2-[(R)-1-carboxyethylamino]pentanoate + NAD(+) + H2O = L-2-aminopentanoate + pyruvate + NADH + H(+). Its function is as follows. In the forward direction also acts on secondary amine dicarboxylates such as N-(1-carboxyethyl)methionine and N-(1-carboxyethyl)phenylalanine. In the reverse direction, the enzyme also acts on neutral amino acids as an amino donor. They include L-amino acids such as 2-aminopentanoic acid, 2-aminobutyric acid, 2-aminohexanoic acid, 3-chloroalanine, O-acetylserine, methionine, isoleucine, valine, phenylalanine, leucine and alanine. This is Opine dehydrogenase (odh) from Arthrobacter sp. (strain 1C).